The chain runs to 197 residues: Thymidylate kinase (197 aa).

Residue 7–14 (GIDGSGKS) participates in ATP binding.

This sequence belongs to the thymidylate kinase family.

The enzyme catalyses dTMP + ATP = dTDP + ADP. Its function is as follows. Phosphorylation of dTMP to form dTDP in both de novo and salvage pathways of dTTP synthesis. The polypeptide is Thymidylate kinase (tmk) (Thermotoga maritima (strain ATCC 43589 / DSM 3109 / JCM 10099 / NBRC 100826 / MSB8)).